The sequence spans 145 residues: 3-dehydroquinate dehydratase (145 aa).

Tyrosine 23 functions as the Proton acceptor in the catalytic mechanism. Residues asparagine 74, histidine 80, and aspartate 87 each coordinate substrate. Catalysis depends on histidine 100, which acts as the Proton donor. Residues 101–102 (LS) and arginine 111 contribute to the substrate site.

This sequence belongs to the type-II 3-dehydroquinase family. As to quaternary structure, homododecamer.

The enzyme catalyses 3-dehydroquinate = 3-dehydroshikimate + H2O. It functions in the pathway metabolic intermediate biosynthesis; chorismate biosynthesis; chorismate from D-erythrose 4-phosphate and phosphoenolpyruvate: step 3/7. In terms of biological role, catalyzes a trans-dehydration via an enolate intermediate. This Halalkalibacterium halodurans (strain ATCC BAA-125 / DSM 18197 / FERM 7344 / JCM 9153 / C-125) (Bacillus halodurans) protein is 3-dehydroquinate dehydratase.